The following is a 318-amino-acid chain: Thymidylate synthase (318 aa).

Residues R26 and 181–182 (RR) contribute to the dUMP site. C201 (nucleophile) is an active-site residue. Residues 221–224 (RSAD), N232, and 262–264 (HIY) contribute to the dUMP site. D224 is a (6R)-5,10-methylene-5,6,7,8-tetrahydrofolate binding site. A317 serves as a coordination point for (6R)-5,10-methylene-5,6,7,8-tetrahydrofolate.

It belongs to the thymidylate synthase family. Bacterial-type ThyA subfamily. Homodimer.

It localises to the cytoplasm. The catalysed reaction is dUMP + (6R)-5,10-methylene-5,6,7,8-tetrahydrofolate = 7,8-dihydrofolate + dTMP. The protein operates within pyrimidine metabolism; dTTP biosynthesis. Its function is as follows. Catalyzes the reductive methylation of 2'-deoxyuridine-5'-monophosphate (dUMP) to 2'-deoxythymidine-5'-monophosphate (dTMP) while utilizing 5,10-methylenetetrahydrofolate (mTHF) as the methyl donor and reductant in the reaction, yielding dihydrofolate (DHF) as a by-product. This enzymatic reaction provides an intracellular de novo source of dTMP, an essential precursor for DNA biosynthesis. The protein is Thymidylate synthase of Staphylococcus haemolyticus (strain JCSC1435).